The following is a 535-amino-acid chain: Probable serine/threonine protein phosphatase 2A regulatory subunit B''delta (535 aa).

The disordered stretch occupies residues 67 to 104; it reads SGTNSGSNSPLASMFPARNGPPLSPRNSTGSPRIARQR. 2 consecutive EF-hand domains span residues 174 to 209 and 387 to 422; these read VPSF…GNML and SSEP…QLHR. Ca(2+)-binding residues include aspartate 400, aspartate 402, asparagine 404, and glutamate 411.

As to quaternary structure, PP2A consists of a common heterodimeric core enzyme, composed of a 36 kDa catalytic subunit (subunit C) and a 65 kDa constant regulatory subunit (PR65 or subunit A), that associates with a variety of regulatory subunits. Proteins that associate with the core dimer include three families of regulatory subunits B (the R2/B/PR55/B55, R3/B''/PR72/PR130/PR59 and R5/B'/B56 families) and cell signaling molecules.

In terms of biological role, probable regulatory subunit of type 2A protein phosphatase. This is Probable serine/threonine protein phosphatase 2A regulatory subunit B''delta (B''DELTA) from Arabidopsis thaliana (Mouse-ear cress).